A 707-amino-acid chain; its full sequence is Elongation factor G (707 aa).

One can recognise a tr-type G domain in the interval 8 to 294 (ERYRNFGIIA…GVVDYLPSPL (287 aa)). Residues 17–24 (AHIDAGKT), 92–96 (DTPGH), and 146–149 (NKMD) contribute to the GTP site.

Belongs to the TRAFAC class translation factor GTPase superfamily. Classic translation factor GTPase family. EF-G/EF-2 subfamily.

The protein localises to the cytoplasm. In terms of biological role, catalyzes the GTP-dependent ribosomal translocation step during translation elongation. During this step, the ribosome changes from the pre-translocational (PRE) to the post-translocational (POST) state as the newly formed A-site-bound peptidyl-tRNA and P-site-bound deacylated tRNA move to the P and E sites, respectively. Catalyzes the coordinated movement of the two tRNA molecules, the mRNA and conformational changes in the ribosome. The chain is Elongation factor G from Hyphomonas neptunium (strain ATCC 15444).